The primary structure comprises 862 residues: DNA gyrase subunit A (862 aa).

A Topo IIA-type catalytic domain is found at 38 to 501 (LPDARDGLKP…DYDDIDVEDL (464 aa)). Residue tyrosine 126 is the O-(5'-phospho-DNA)-tyrosine intermediate of the active site. The GyrA-box motif lies at 528-534 (QKRGGKG). The disordered stretch occupies residues 843–862 (KEESDDDDIVADDTQEQDME). The segment covering 845–862 (ESDDDDIVADDTQEQDME) has biased composition (acidic residues).

The protein belongs to the type II topoisomerase GyrA/ParC subunit family. As to quaternary structure, heterotetramer, composed of two GyrA and two GyrB chains. In the heterotetramer, GyrA contains the active site tyrosine that forms a transient covalent intermediate with DNA, while GyrB binds cofactors and catalyzes ATP hydrolysis.

It is found in the cytoplasm. It catalyses the reaction ATP-dependent breakage, passage and rejoining of double-stranded DNA.. Functionally, a type II topoisomerase that negatively supercoils closed circular double-stranded (ds) DNA in an ATP-dependent manner to modulate DNA topology and maintain chromosomes in an underwound state. Negative supercoiling favors strand separation, and DNA replication, transcription, recombination and repair, all of which involve strand separation. Also able to catalyze the interconversion of other topological isomers of dsDNA rings, including catenanes and knotted rings. Type II topoisomerases break and join 2 DNA strands simultaneously in an ATP-dependent manner. The sequence is that of DNA gyrase subunit A from Campylobacter fetus.